The chain runs to 375 residues: 5-amino-6-(D-ribitylamino)uracil--L-tyrosine 4-hydroxyphenyl transferase 1 (375 aa).

Residues 50 to 284 form the Radical SAM core domain; that stretch reads VTYVVNRNIN…AVSRILFHGH (235 aa). [4Fe-4S] cluster is bound by residues Cys64, Cys68, and Cys71.

Belongs to the radical SAM superfamily. CofH family. As to quaternary structure, consists of two subunits, CofG and CofH. The cofactor is [4Fe-4S] cluster.

The catalysed reaction is 5-amino-6-(D-ribitylamino)uracil + L-tyrosine + S-adenosyl-L-methionine = 5-amino-5-(4-hydroxybenzyl)-6-(D-ribitylimino)-5,6-dihydrouracil + 2-iminoacetate + 5'-deoxyadenosine + L-methionine + H(+). Its pathway is cofactor biosynthesis; coenzyme F0 biosynthesis. Functionally, catalyzes the radical-mediated synthesis of 5-amino-5-(4-hydroxybenzyl)-6-(D-ribitylimino)-5,6-dihydrouracil from 5-amino-6-(D-ribitylamino)uracil and L-tyrosine. The chain is 5-amino-6-(D-ribitylamino)uracil--L-tyrosine 4-hydroxyphenyl transferase 1 from Methanosarcina acetivorans (strain ATCC 35395 / DSM 2834 / JCM 12185 / C2A).